Here is a 78-residue protein sequence, read N- to C-terminus: FVLPGNNLVTPSAECCSSLSAVNTGCLCETINILSSLPANAAFHQSAAGIFDIGLYMEAKANETRWSLFSFPRVFLFE.

This sequence belongs to the A9/FIL1 family. Tapetum of anthers.

It localises to the secreted. The protein is Protein M6 (M6) of Lilium henryi (Henry's lily).